The primary structure comprises 327 residues: Phenylalanine--tRNA ligase alpha subunit (327 aa).

Glutamate 252 serves as a coordination point for Mg(2+).

This sequence belongs to the class-II aminoacyl-tRNA synthetase family. Phe-tRNA synthetase alpha subunit type 1 subfamily. In terms of assembly, tetramer of two alpha and two beta subunits. It depends on Mg(2+) as a cofactor.

It localises to the cytoplasm. It catalyses the reaction tRNA(Phe) + L-phenylalanine + ATP = L-phenylalanyl-tRNA(Phe) + AMP + diphosphate + H(+). This Vibrio parahaemolyticus serotype O3:K6 (strain RIMD 2210633) protein is Phenylalanine--tRNA ligase alpha subunit.